Here is a 253-residue protein sequence, read N- to C-terminus: Ribonuclease HII (253 aa).

An RNase H type-2 domain is found at 70–253 (NLIAGIDEVG…KSFEPIKSML (184 aa)). 3 residues coordinate a divalent metal cation: D76, E77, and D168.

This sequence belongs to the RNase HII family. Requires Mn(2+) as cofactor. The cofactor is Mg(2+).

The protein localises to the cytoplasm. The enzyme catalyses Endonucleolytic cleavage to 5'-phosphomonoester.. Its function is as follows. Endonuclease that specifically degrades the RNA of RNA-DNA hybrids. The protein is Ribonuclease HII of Streptococcus agalactiae serotype III (strain NEM316).